A 161-amino-acid chain; its full sequence is Cyclic pyranopterin monophosphate synthase (161 aa).

Residues 75–77 (MCH) and 115–116 (ME) each bind substrate. The active site involves Asp-130.

The protein belongs to the MoaC family. In terms of assembly, homohexamer; trimer of dimers.

The catalysed reaction is (8S)-3',8-cyclo-7,8-dihydroguanosine 5'-triphosphate = cyclic pyranopterin phosphate + diphosphate. It participates in cofactor biosynthesis; molybdopterin biosynthesis. In terms of biological role, catalyzes the conversion of (8S)-3',8-cyclo-7,8-dihydroguanosine 5'-triphosphate to cyclic pyranopterin monophosphate (cPMP). The polypeptide is Cyclic pyranopterin monophosphate synthase (Bacillus cereus (strain 03BB102)).